Here is a 203-residue protein sequence, read N- to C-terminus: 3-isopropylmalate dehydratase small subunit (203 aa).

The protein belongs to the LeuD family. LeuD type 1 subfamily. Heterodimer of LeuC and LeuD.

The enzyme catalyses (2R,3S)-3-isopropylmalate = (2S)-2-isopropylmalate. Its pathway is amino-acid biosynthesis; L-leucine biosynthesis; L-leucine from 3-methyl-2-oxobutanoate: step 2/4. In terms of biological role, catalyzes the isomerization between 2-isopropylmalate and 3-isopropylmalate, via the formation of 2-isopropylmaleate. The polypeptide is 3-isopropylmalate dehydratase small subunit (Symbiobacterium thermophilum (strain DSM 24528 / JCM 14929 / IAM 14863 / T)).